A 622-amino-acid chain; its full sequence is 1-deoxy-D-xylulose-5-phosphate synthase (622 aa).

Residues histidine 80 and 121 to 123 (GHS) each bind thiamine diphosphate. Aspartate 152 lines the Mg(2+) pocket. Thiamine diphosphate contacts are provided by residues 153-154 (GA), asparagine 181, tyrosine 288, and glutamate 370. Mg(2+) is bound at residue asparagine 181.

Belongs to the transketolase family. DXPS subfamily. In terms of assembly, homodimer. Mg(2+) serves as cofactor. Requires thiamine diphosphate as cofactor.

It catalyses the reaction D-glyceraldehyde 3-phosphate + pyruvate + H(+) = 1-deoxy-D-xylulose 5-phosphate + CO2. It participates in metabolic intermediate biosynthesis; 1-deoxy-D-xylulose 5-phosphate biosynthesis; 1-deoxy-D-xylulose 5-phosphate from D-glyceraldehyde 3-phosphate and pyruvate: step 1/1. Catalyzes the acyloin condensation reaction between C atoms 2 and 3 of pyruvate and glyceraldehyde 3-phosphate to yield 1-deoxy-D-xylulose-5-phosphate (DXP). This Shewanella denitrificans (strain OS217 / ATCC BAA-1090 / DSM 15013) protein is 1-deoxy-D-xylulose-5-phosphate synthase.